A 370-amino-acid polypeptide reads, in one-letter code: Queuine tRNA-ribosyltransferase (370 aa).

The active-site Proton acceptor is Asp89. Substrate-binding positions include 89-93, Asp143, and Gly214; that span reads DSGGF. Residues 245 to 251 are RNA binding; the sequence is GVGKPED. Asp264 acts as the Nucleophile in catalysis. An RNA binding; important for wobble base 34 recognition region spans residues 269-273; it reads TRNAR. Residues Cys302, Cys304, Cys307, and His333 each coordinate Zn(2+).

The protein belongs to the queuine tRNA-ribosyltransferase family. As to quaternary structure, homodimer. Within each dimer, one monomer is responsible for RNA recognition and catalysis, while the other monomer binds to the replacement base PreQ1. Zn(2+) is required as a cofactor.

It catalyses the reaction 7-aminomethyl-7-carbaguanine + guanosine(34) in tRNA = 7-aminomethyl-7-carbaguanosine(34) in tRNA + guanine. It functions in the pathway tRNA modification; tRNA-queuosine biosynthesis. In terms of biological role, catalyzes the base-exchange of a guanine (G) residue with the queuine precursor 7-aminomethyl-7-deazaguanine (PreQ1) at position 34 (anticodon wobble position) in tRNAs with GU(N) anticodons (tRNA-Asp, -Asn, -His and -Tyr). Catalysis occurs through a double-displacement mechanism. The nucleophile active site attacks the C1' of nucleotide 34 to detach the guanine base from the RNA, forming a covalent enzyme-RNA intermediate. The proton acceptor active site deprotonates the incoming PreQ1, allowing a nucleophilic attack on the C1' of the ribose to form the product. After dissociation, two additional enzymatic reactions on the tRNA convert PreQ1 to queuine (Q), resulting in the hypermodified nucleoside queuosine (7-(((4,5-cis-dihydroxy-2-cyclopenten-1-yl)amino)methyl)-7-deazaguanosine). This chain is Queuine tRNA-ribosyltransferase, found in Buchnera aphidicola subsp. Acyrthosiphon pisum (strain 5A).